The following is a 1720-amino-acid chain: DNA-directed RNA polymerase I subunit RPA1 (1720 aa).

6 residues coordinate Zn(2+): Cys-64, Cys-67, Cys-74, His-77, Cys-104, and Cys-107. The tract at residues 110 to 201 (LTCPRAVIHL…IALFWKAHMN (92 aa)) is clamp. The Zn(2+) site is built by Cys-205 and Cys-208. Phosphoserine is present on Ser-240. The tract at residues 320-426 (FTNGQTVNLQ…IRQILEKKEG (107 aa)) is clamp. The rudder stretch occupies residues 403–416 (DSEMDKLMMDKYPG). DNA contacts are provided by Lys-424, Arg-429, and Arg-436. Positions 468–542 (YPQPVTPWNV…QGTKIVCRHV (75 aa)) are involved in RRN3 binding to Pol I complex. Arg-552 is an RNA binding site. Mg(2+)-binding residues include Asp-588, Asp-590, and Asp-592. Position 592 (Asp-592) interacts with RNA. The funnel stretch occupies residues 805–883 (KPKADVKRQR…NEINKACMPF (79 aa)). The bridging helix stretch occupies residues 960–1001 (KPPEFFFHCMAGREGLVDTAVKTSRSGYLQRCIIKHLEGLVV). The tract at residues 1060-1155 (ADPKKALHHF…SLSVWRPDIY (96 aa)) is mediates the interaction with TOP2A. The trigger loop stretch occupies residues 1207–1248 (PGEAVGLLAAQSIGEPSTQMTLNTFHFAGRGEMNVTLGIPRL). Arg-1249 provides a ligand contact to DNA. The segment at 1365–1498 (RNVNTRRATQ…SQEPQGPEAM (134 aa)) is disordered. Basic and acidic residues predominate over residues 1373 to 1390 (TQRDLDNAGELGRSRGEQ). Phosphoserine is present on Ser-1386. Acidic residues-rich tracts occupy residues 1391–1412 (EGDE…DADA) and 1422–1446 (EEEV…EDMQ). Basic and acidic residues predominate over residues 1447–1461 (EERNPHREGARKTQE). Positions 1462–1474 (QDEEVGLGTEEDP) are enriched in acidic residues.

This sequence belongs to the RNA polymerase beta' chain family. Component of the RNA polymerase I (Pol I) complex consisting of 13 subunits: a ten-subunit catalytic core composed of POLR1A/RPA1, POLR1B/RPA2, POLR1C/RPAC1, POLR1D/RPAC2, POLR1H/RPA12, POLR2E/RPABC1, POLR2F/RPABC2, POLR2H/RPABC3, POLR2K/RPABC4 and POLR2L/RPABC5; a mobile stalk subunit POLR1F/RPA43 protruding from the core and additional subunits homologous to general transcription factors POLR1E/RPA49 and POLR1G/RPA34. Part of Pol I pre-initiation complex (PIC), in which Pol I core assembles with RRN3 and promoter-bound UTBF and SL1/TIF-IB complex. Interacts (via dock II domain) with TOP2A; this interaction may assist Pol I transcription initiation by releasing supercoils occurring during DNA unwinding. Interacts with CAVIN1; this interaction induces the dissociation of Pol I complex paused at rDNA terminator sequences. Interacts with MYO1C. Interacts with ERBB2. Interacts with DDX11. Interacts with RECQL5. It depends on Mg(2+) as a cofactor.

It is found in the nucleus. The protein localises to the nucleolus. Its subcellular location is the chromosome. It catalyses the reaction RNA(n) + a ribonucleoside 5'-triphosphate = RNA(n+1) + diphosphate. Catalytic core component of RNA polymerase I (Pol I), a DNA-dependent RNA polymerase which synthesizes ribosomal RNA precursors using the four ribonucleoside triphosphates as substrates. Transcribes 47S pre-rRNAs from multicopy rRNA gene clusters, giving rise to 5.8S, 18S and 28S ribosomal RNAs. Pol I-mediated transcription cycle proceeds through transcription initiation, transcription elongation and transcription termination stages. During transcription initiation, Pol I pre-initiation complex (PIC) is recruited by the selectivity factor 1 (SL1/TIF-IB) complex bound to the core promoter that precedes an rDNA repeat unit. The PIC assembly bends the promoter favoring the formation of the transcription bubble and promoter escape. Once the polymerase has escaped from the promoter it enters the elongation phase during which RNA is actively polymerized, based on complementarity with the template DNA strand. Highly processive, assembles in structures referred to as 'Miller trees' where many elongating Pol I complexes queue and transcribe the same rDNA coding regions. At terminator sequences downstream of the rDNA gene, PTRF interacts with Pol I and halts Pol I transcription leading to the release of the RNA transcript and polymerase from the DNA. Forms Pol I active center together with the second largest subunit POLR1B/RPA2. Appends one nucleotide at a time to the 3' end of the nascent RNA, with POLR1A/RPA1 contributing a Mg(2+)-coordinating DxDGD motif, and POLR1B/RPA2 participating in the coordination of a second Mg(2+) ion and providing lysine residues believed to facilitate Watson-Crick base pairing between the incoming nucleotide and the template base. Typically, Mg(2+) ions direct a 5' nucleoside triphosphate to form a phosphodiester bond with the 3' hydroxyl of the preceding nucleotide of the nascent RNA, with the elimination of pyrophosphate. Has proofreading activity: Pauses and backtracks to allow the cleavage of a missincorporated nucleotide via POLR1H/RPA12. High Pol I processivity is associated with decreased transcription fidelity. The sequence is that of DNA-directed RNA polymerase I subunit RPA1 from Homo sapiens (Human).